Reading from the N-terminus, the 262-residue chain is F-actin-capping protein subunit alpha (262 aa).

Belongs to the F-actin-capping protein alpha subunit family. As to quaternary structure, heterodimer of an alpha and a beta subunit.

In terms of biological role, F-actin-capping proteins bind in a Ca(2+)-independent manner to the fast growing ends of actin filaments (barbed end) thereby blocking the exchange of subunits at these ends. Unlike other capping proteins (such as gelsolin and severin), these proteins do not sever actin filaments. This is F-actin-capping protein subunit alpha (CAP1) from Kluyveromyces lactis (strain ATCC 8585 / CBS 2359 / DSM 70799 / NBRC 1267 / NRRL Y-1140 / WM37) (Yeast).